We begin with the raw amino-acid sequence, 272 residues long: Protein SSO0103 (272 aa).

It belongs to the CinA family.

The polypeptide is Protein SSO0103 (Saccharolobus solfataricus (strain ATCC 35092 / DSM 1617 / JCM 11322 / P2) (Sulfolobus solfataricus)).